A 227-amino-acid chain; its full sequence is Isopentenyl-diphosphate Delta-isomerase 1 (227 aa).

K36 is a binding site for substrate. Mg(2+)-binding residues include H40 and H51. Positions 49–199 (LLHRAFSVFL…EIKITPWFKI (151 aa)) constitute a Nudix hydrolase domain. 2 residues coordinate substrate: R70 and K74. Residue C86 is part of the active site. S87 is a substrate binding site. 2 residues coordinate Mg(2+): E146 and E148. Residue E148 is part of the active site. At K176 the chain carries N6-acetyllysine. The short motif at 225-227 (YRM) is the Microbody targeting signal element.

The protein belongs to the IPP isomerase type 1 family. Monomer. Requires Mg(2+) as cofactor.

It localises to the peroxisome. It carries out the reaction isopentenyl diphosphate = dimethylallyl diphosphate. Its pathway is isoprenoid biosynthesis; dimethylallyl diphosphate biosynthesis; dimethylallyl diphosphate from isopentenyl diphosphate: step 1/1. Functionally, catalyzes the 1,3-allylic rearrangement of the homoallylic substrate isopentenyl (IPP) to its highly electrophilic allylic isomer, dimethylallyl diphosphate (DMAPP). The sequence is that of Isopentenyl-diphosphate Delta-isomerase 1 (IDI1) from Homo sapiens (Human).